A 308-amino-acid chain; its full sequence is Elongation factor Ts (308 aa).

Residues 80–83 (TDFV) form an involved in Mg(2+) ion dislocation from EF-Tu region.

The protein belongs to the EF-Ts family.

It is found in the cytoplasm. Associates with the EF-Tu.GDP complex and induces the exchange of GDP to GTP. It remains bound to the aminoacyl-tRNA.EF-Tu.GTP complex up to the GTP hydrolysis stage on the ribosome. The protein is Elongation factor Ts of Methylobacterium radiotolerans (strain ATCC 27329 / DSM 1819 / JCM 2831 / NBRC 15690 / NCIMB 10815 / 0-1).